Here is a 397-residue protein sequence, read N- to C-terminus: Phosphoglycerate kinase (397 aa).

Residues 21-23 (DVN), arginine 36, 59-62 (HFGR), arginine 119, and arginine 152 contribute to the substrate site. ATP contacts are provided by residues lysine 202, glutamate 324, and 354–357 (GGDT).

This sequence belongs to the phosphoglycerate kinase family. As to quaternary structure, monomer.

It localises to the cytoplasm. It carries out the reaction (2R)-3-phosphoglycerate + ATP = (2R)-3-phospho-glyceroyl phosphate + ADP. The protein operates within carbohydrate degradation; glycolysis; pyruvate from D-glyceraldehyde 3-phosphate: step 2/5. In Cereibacter sphaeroides (strain ATCC 17025 / ATH 2.4.3) (Rhodobacter sphaeroides), this protein is Phosphoglycerate kinase.